Reading from the N-terminus, the 92-residue chain is Small ribosomal subunit protein bS21 (92 aa).

Residues 37–92 are disordered; that stretch reads QREGTFREMKRRNHYEKPSEKKARQKAEAIRRARKLARKRAQREGLIAKRGGTTRR. Residues 51-67 show a composition bias toward basic and acidic residues; sequence YEKPSEKKARQKAEAIR. A compositionally biased stretch (basic residues) spans 68 to 77; it reads RARKLARKRA.

Belongs to the bacterial ribosomal protein bS21 family.

The protein is Small ribosomal subunit protein bS21 of Maricaulis maris (strain MCS10) (Caulobacter maris).